A 402-amino-acid chain; its full sequence is Nicotinate phosphoribosyltransferase (402 aa).

Phosphohistidine; by autocatalysis is present on histidine 224.

Belongs to the NAPRTase family. Transiently phosphorylated on a His residue during the reaction cycle. Phosphorylation strongly increases the affinity for substrates and increases the rate of nicotinate D-ribonucleotide production. Dephosphorylation regenerates the low-affinity form of the enzyme, leading to product release.

It catalyses the reaction nicotinate + 5-phospho-alpha-D-ribose 1-diphosphate + ATP + H2O = nicotinate beta-D-ribonucleotide + ADP + phosphate + diphosphate. Its pathway is cofactor biosynthesis; NAD(+) biosynthesis; nicotinate D-ribonucleotide from nicotinate: step 1/1. In terms of biological role, catalyzes the synthesis of beta-nicotinate D-ribonucleotide from nicotinate and 5-phospho-D-ribose 1-phosphate at the expense of ATP. This Neisseria gonorrhoeae (strain ATCC 700825 / FA 1090) protein is Nicotinate phosphoribosyltransferase.